The chain runs to 369 residues: S-(hydroxymethyl)glutathione dehydrogenase (369 aa).

Residues cysteine 40, histidine 62, cysteine 92, cysteine 95, cysteine 98, cysteine 106, and cysteine 169 each contribute to the Zn(2+) site.

It belongs to the zinc-containing alcohol dehydrogenase family. Class-III subfamily. In terms of assembly, homodimer. Requires Zn(2+) as cofactor.

The protein resides in the cytoplasm. It catalyses the reaction S-(hydroxymethyl)glutathione + NADP(+) = S-formylglutathione + NADPH + H(+). The catalysed reaction is S-(hydroxymethyl)glutathione + NAD(+) = S-formylglutathione + NADH + H(+). The enzyme catalyses a primary alcohol + NAD(+) = an aldehyde + NADH + H(+). It carries out the reaction a secondary alcohol + NAD(+) = a ketone + NADH + H(+). It catalyses the reaction S-nitrosoglutathione + NADH + H(+) = S-(hydroxysulfenamide)glutathione + NAD(+). In terms of biological role, has high formaldehyde dehydrogenase activity in the presence of glutathione and catalyzes the oxidation of normal alcohols in a reaction that is not GSH-dependent. In addition, hemithiolacetals other than those formed from GSH, including omega-thiol fatty acids, also are substrates. Also acts as a S-nitroso-glutathione reductase by catalyzing the NADH-dependent reduction of S-nitrosoglutathione. This chain is S-(hydroxymethyl)glutathione dehydrogenase (frmA), found in Photobacterium damsela subsp. piscicida (Pasteurella piscicida).